Here is a 95-residue protein sequence, read N- to C-terminus: Small ribosomal subunit protein bS18 (95 aa).

The protein belongs to the bacterial ribosomal protein bS18 family. Part of the 30S ribosomal subunit. Forms a tight heterodimer with protein bS6.

Binds as a heterodimer with protein bS6 to the central domain of the 16S rRNA, where it helps stabilize the platform of the 30S subunit. The sequence is that of Small ribosomal subunit protein bS18 from Rickettsia peacockii (strain Rustic).